The sequence spans 369 residues: Beta-1,4-galactosyltransferase 2 (369 aa).

The Cytoplasmic portion of the chain corresponds to 1–15 (MSRLLGGTLERVCKA). The helical; Signal-anchor for type II membrane protein transmembrane segment at 16 to 36 (VLLLCLLHFLVAVILYFDVYA) threads the bilayer. Over 37–369 (QHLAFFSRFS…GRPMSWLNQG (333 aa)) the chain is Lumenal. Residues 59 to 75 (SSSTNCSRPNATASSSG) show a composition bias toward polar residues. Residues 59–90 (SSSTNCSRPNATASSSGLPEVPSARPGPTAPV) are disordered. Residues asparagine 63 and asparagine 68 are each glycosylated (N-linked (GlcNAc...) asparagine). Cysteine 94 and cysteine 136 are joined by a disulfide. UDP-alpha-D-galactose is bound by residues 147–151 (PFRHR), 186–188 (FNR), 214–215 (VD), and tryptophan 275. Cysteine 208 and cysteine 227 are joined by a disulfide. Aspartate 215 contacts Mn(2+). 277-280 (GEDD) serves as a coordination point for N-acetyl-D-glucosamine. Histidine 308 is a binding site for Mn(2+). Position 308–310 (308–310 (HDR)) interacts with UDP-alpha-D-galactose. An N-acetyl-D-glucosamine-binding site is contributed by arginine 320. An N-linked (GlcNAc...) asparagine glycan is attached at asparagine 354.

This sequence belongs to the glycosyltransferase 7 family. Mn(2+) serves as cofactor.

It is found in the golgi apparatus. The protein localises to the golgi stack membrane. It carries out the reaction D-glucose + UDP-alpha-D-galactose = lactose + UDP + H(+). The enzyme catalyses an N-acetyl-beta-D-glucosaminyl derivative + UDP-alpha-D-galactose = a beta-D-galactosyl-(1-&gt;4)-N-acetyl-beta-D-glucosaminyl derivative + UDP + H(+). The catalysed reaction is N-acetyl-D-glucosamine + UDP-alpha-D-galactose = beta-D-galactosyl-(1-&gt;4)-N-acetyl-D-glucosamine + UDP + H(+). It functions in the pathway protein modification; protein glycosylation. Responsible for the synthesis of complex-type N-linked oligosaccharides in many glycoproteins as well as the carbohydrate moieties of glycolipids. Can produce lactose. The chain is Beta-1,4-galactosyltransferase 2 (B4GALT2) from Cricetulus griseus (Chinese hamster).